Reading from the N-terminus, the 337-residue chain is DNA-directed RNA polymerase subunit alpha (337 aa).

Residues 1–231 (MRNITTSAYT…KQLSVFDKIT (231 aa)) form an alpha N-terminal domain (alpha-NTD) region. An alpha C-terminal domain (alpha-CTD) region spans residues 248-337 (NTKLLQNITD…IAELKAQNEG (90 aa)).

The protein belongs to the RNA polymerase alpha chain family. As to quaternary structure, homodimer. The RNAP catalytic core consists of 2 alpha, 1 beta, 1 beta' and 1 omega subunit. When a sigma factor is associated with the core the holoenzyme is formed, which can initiate transcription.

The catalysed reaction is RNA(n) + a ribonucleoside 5'-triphosphate = RNA(n+1) + diphosphate. Functionally, DNA-dependent RNA polymerase catalyzes the transcription of DNA into RNA using the four ribonucleoside triphosphates as substrates. The protein is DNA-directed RNA polymerase subunit alpha of Campylobacter jejuni subsp. jejuni serotype O:6 (strain 81116 / NCTC 11828).